We begin with the raw amino-acid sequence, 180 residues long: Vacuolar ATPase assembly protein VMA22 (180 aa).

Residues 16–37 (QLLGDLEELEGKRTVLNARVEE) are a coiled coil. Residues 92–101 (EEVGPREAGL) are compositionally biased toward basic and acidic residues. A disordered region spans residues 92-122 (EEVGPREAGLRRRKGPTKTPEPESSEAPQDP). Residues 153-176 (SLQNRIDWGRSQLRGLQEKLKQLE) adopt a coiled-coil conformation.

Accessory component of the multisubunit proton-transporting vacuolar (V)-ATPase protein pump. Expressed throughout the brain.

It localises to the endosome. Its subcellular location is the lysosome. The protein localises to the endoplasmic reticulum-Golgi intermediate compartment. It is found in the cytoplasmic vesicle. The protein resides in the COPI-coated vesicle. It localises to the endoplasmic reticulum. In terms of biological role, accessory component of the proton-transporting vacuolar (V)-ATPase protein pump involved in intracellular iron homeostasis. In aerobic conditions, required for intracellular iron homeostasis, thus triggering the activity of Fe(2+) prolyl hydroxylase (PHD) enzymes, and leading to HIF1A hydroxylation and subsequent proteasomal degradation. Necessary for endolysosomal acidification and lysosomal degradation. May be involved in Golgi homeostasis. The protein is Vacuolar ATPase assembly protein VMA22 of Homo sapiens (Human).